Reading from the N-terminus, the 252-residue chain is Chitooligosaccharide deacetylase (252 aa).

The Mg(2+) site is built by His61 and His125.

The protein belongs to the YdjC deacetylase family. ChbG subfamily. In terms of assembly, homodimer. The cofactor is Mg(2+).

The protein localises to the cytoplasm. It carries out the reaction N,N'-diacetylchitobiose + H2O = N-acetyl-beta-D-glucosaminyl-(1-&gt;4)-D-glucosamine + acetate. The enzyme catalyses diacetylchitobiose-6'-phosphate + H2O = N'-monoacetylchitobiose-6'-phosphate + acetate. It participates in glycan degradation; chitin degradation. Its function is as follows. Involved in the degradation of chitin. ChbG is essential for growth on the acetylated chitooligosaccharides chitobiose and chitotriose but is dispensable for growth on cellobiose and chitosan dimer, the deacetylated form of chitobiose. Deacetylation of chitobiose-6-P and chitotriose-6-P is necessary for both the activation of the chb promoter by the regulatory protein ChbR and the hydrolysis of phosphorylated beta-glucosides by the phospho-beta-glucosidase ChbF. Catalyzes the removal of only one acetyl group from chitobiose-6-P to yield monoacetylchitobiose-6-P, the inducer of ChbR and the substrate of ChbF. This chain is Chitooligosaccharide deacetylase, found in Escherichia coli O6:H1 (strain CFT073 / ATCC 700928 / UPEC).